Here is a 311-residue protein sequence, read N- to C-terminus: Ketoisovalerate oxidoreductase subunit VorB (311 aa).

In terms of assembly, heterotetramer of one alpha, one beta, one delta and one gamma chain.

It catalyses the reaction 3-methyl-2-oxobutanoate + 2 oxidized [2Fe-2S]-[ferredoxin] + CoA = 2-methylpropanoyl-CoA + 2 reduced [2Fe-2S]-[ferredoxin] + CO2 + H(+). This Pyrococcus furiosus (strain ATCC 43587 / DSM 3638 / JCM 8422 / Vc1) protein is Ketoisovalerate oxidoreductase subunit VorB (vorB).